Reading from the N-terminus, the 509-residue chain is CDK5RAP3 protein homolog (509 aa).

It belongs to the CDK5RAP3 family.

The protein localises to the nucleus. The protein resides in the cytoplasm. Functionally, substrate adapter of E3 ligase complexes mediating ufmylation, the covalent attachment of the ubiquitin-like modifier UFM1 to substrate proteins, and which is involved in various processes, such as ribosome recycling and reticulophagy (also called ER-phagy). The protein is CDK5RAP3 protein homolog of Drosophila melanogaster (Fruit fly).